Consider the following 235-residue polypeptide: Phosphoribosylaminoimidazole-succinocarboxamide synthase (235 aa).

It belongs to the SAICAR synthetase family.

It carries out the reaction 5-amino-1-(5-phospho-D-ribosyl)imidazole-4-carboxylate + L-aspartate + ATP = (2S)-2-[5-amino-1-(5-phospho-beta-D-ribosyl)imidazole-4-carboxamido]succinate + ADP + phosphate + 2 H(+). It functions in the pathway purine metabolism; IMP biosynthesis via de novo pathway; 5-amino-1-(5-phospho-D-ribosyl)imidazole-4-carboxamide from 5-amino-1-(5-phospho-D-ribosyl)imidazole-4-carboxylate: step 1/2. The chain is Phosphoribosylaminoimidazole-succinocarboxamide synthase from Lachnoclostridium phytofermentans (strain ATCC 700394 / DSM 18823 / ISDg) (Clostridium phytofermentans).